The sequence spans 21 residues: Protein YliM (21 aa).

The sequence is that of Protein YliM from Escherichia coli (strain K12).